Consider the following 2939-residue polypeptide: Serine/threonine-protein kinase tel1 (2939 aa).

Disordered stretches follow at residues 193-212 (GTSV…RAGS), 695-718 (PPED…AADS), and 859-886 (KTRR…ETRK). Residues 697–715 (EDSHKATSTDQPKREEIRA) are compositionally biased toward basic and acidic residues. One can recognise an FAT domain in the interval 1869–2471 (IAAAAATRCG…MYQIWSGVKA (603 aa)). The PI3K/PI4K catalytic domain occupies 2577-2890 (FEPQMSIASG…DKKSTKNLNE (314 aa)). The segment at 2583–2589 (IASGVSA) is G-loop. The catalytic loop stretch occupies residues 2755 to 2763 (GLGDRHGHN). The tract at residues 2775 to 2799 (HIDLGVAFELGRILPVPELVPFRLT) is activation loop. Residues 2869-2894 (DVVEAEDERRAGDKKSTKNLNEPSEA) form a disordered region. Residues 2875–2884 (DERRAGDKKS) are compositionally biased toward basic and acidic residues. In terms of domain architecture, FATC spans 2907 to 2939 (KTLSVMATVNDLINQATDERNLAVLFCGWAAYA).

Belongs to the PI3/PI4-kinase family. ATM subfamily. Associates with DNA double-strand breaks.

It localises to the nucleus. It is found in the chromosome. The protein localises to the telomere. The enzyme catalyses L-seryl-[protein] + ATP = O-phospho-L-seryl-[protein] + ADP + H(+). It catalyses the reaction L-threonyl-[protein] + ATP = O-phospho-L-threonyl-[protein] + ADP + H(+). Its function is as follows. Serine/threonine protein kinase which activates checkpoint signaling upon genotoxic stresses such as ionizing radiation (IR), ultraviolet light (UV), or DNA replication stalling, thereby acting as a DNA damage sensor. Recognizes the substrate consensus sequence [ST]-Q. Phosphorylates histone H2A to form H2AS128ph (gamma-H2A) at sites of DNA damage, involved in the regulation of DNA damage response mechanism. Required for the control of telomere length and genome stability. This chain is Serine/threonine-protein kinase tel1 (mus-21), found in Neurospora crassa (strain ATCC 24698 / 74-OR23-1A / CBS 708.71 / DSM 1257 / FGSC 987).